The following is an 848-amino-acid chain: Heat shock protein 70 homolog lhs1 (848 aa).

An N-terminal signal peptide occupies residues 1 to 21; the sequence is MKRSVLTIILFFSCQFWHAFA. Asn-134, Asn-247, Asn-359, Asn-457, Asn-462, Asn-488, Asn-555, Asn-632, Asn-678, Asn-733, and Asn-817 each carry an N-linked (GlcNAc...) asparagine glycan. The disordered stretch occupies residues 784–848; that stretch reads KLKAKKGASS…QQEIDDSDEL (65 aa). Composition is skewed to polar residues over residues 807 to 822 and 829 to 840; these read TNDIEPTTALNSTSTQ and ASVTQRPSSLQQ. Residues 845-848 carry the Prevents secretion from ER motif; that stretch reads SDEL.

The protein belongs to the heat shock protein 70 family.

It localises to the endoplasmic reticulum lumen. It carries out the reaction ATP + H2O = ADP + phosphate + H(+). In terms of biological role, chaperone required for protein translocation and folding in the endoplasmic reticulum. The polypeptide is Heat shock protein 70 homolog lhs1 (Schizosaccharomyces pombe (strain 972 / ATCC 24843) (Fission yeast)).